We begin with the raw amino-acid sequence, 68 residues long: Protein SlyX homolog (68 aa).

This sequence belongs to the SlyX family.

This Pseudomonas putida (strain GB-1) protein is Protein SlyX homolog.